The following is a 545-amino-acid chain: MWLDRRGWLRVLGHWRYDLRRPSFTRTWSGDKGPMAETVSTQVGTEGGLRASHQQNGDAGGDAKVELSPGPPKPAGREVEPAPVGGEHPSAAAPGPGKHKKRRGATRERVVPPPKKRRTGVSFGDEHFAETSYYFEGGLRKVRPYYFDFRTYCKGRWVGHSLLHVFSTEFRAQPLAYYEAAVRAGRLQLNEKPVQDLNIVLKDNDFLRNTVHRHEPPVTAEPIRLLAENEDVVVVDKPSSIPVHPCGRFRHNTVIFILGKEHQLKELHPLHRLDRLTSGVLMFAKTAAVSERIHEQVRDRQLEKEYVCRVEGEFPTEEVTCKEPILVVSYKVGVCRVDPRGKPCETVFQRLSYNGQSSVVRCRPLTGRTHQIRVHLQFLGHPILNDPIYNSVAWGPSRGRGGYIPKTNEELLRDLVAEHQAKQSLDVLDLCEGDLSPGLTDSTAPSSELGKDDLEELAAAAQKMEEVAEAAPQELDTIALASEKAVETDVMNQETDPLCAECRLVRQDPLPQDLVMFLHALRYKGPGFEYFSPMPAWAQDDWQKD.

The segment at Gly48–Val121 is disordered. Ser68 is subject to Phosphoserine. Residue Asp274 is part of the active site. Thr477 carries the post-translational modification Phosphothreonine.

Belongs to the pseudouridine synthase RluA family.

It catalyses the reaction a uridine in mRNA = a pseudouridine in mRNA. Functionally, pseudouridine synthase that catalyzes pseudouridylation of mRNAs. In Homo sapiens (Human), this protein is Pseudouridylate synthase RPUSD2.